A 228-amino-acid chain; its full sequence is Thiamine-phosphate synthase (228 aa).

Residues 57–61 (QLRDK) and asparagine 89 contribute to the 4-amino-2-methyl-5-(diphosphooxymethyl)pyrimidine site. Mg(2+) contacts are provided by aspartate 90 and aspartate 109. Residue serine 128 coordinates 4-amino-2-methyl-5-(diphosphooxymethyl)pyrimidine. 2-[(2R,5Z)-2-carboxy-4-methylthiazol-5(2H)-ylidene]ethyl phosphate is bound at residue 154–156 (TPS). Lysine 157 serves as a coordination point for 4-amino-2-methyl-5-(diphosphooxymethyl)pyrimidine. 2-[(2R,5Z)-2-carboxy-4-methylthiazol-5(2H)-ylidene]ethyl phosphate-binding positions include glycine 185 and 205–206 (IS).

The protein belongs to the thiamine-phosphate synthase family. The cofactor is Mg(2+).

The enzyme catalyses 2-[(2R,5Z)-2-carboxy-4-methylthiazol-5(2H)-ylidene]ethyl phosphate + 4-amino-2-methyl-5-(diphosphooxymethyl)pyrimidine + 2 H(+) = thiamine phosphate + CO2 + diphosphate. It carries out the reaction 2-(2-carboxy-4-methylthiazol-5-yl)ethyl phosphate + 4-amino-2-methyl-5-(diphosphooxymethyl)pyrimidine + 2 H(+) = thiamine phosphate + CO2 + diphosphate. It catalyses the reaction 4-methyl-5-(2-phosphooxyethyl)-thiazole + 4-amino-2-methyl-5-(diphosphooxymethyl)pyrimidine + H(+) = thiamine phosphate + diphosphate. It participates in cofactor biosynthesis; thiamine diphosphate biosynthesis; thiamine phosphate from 4-amino-2-methyl-5-diphosphomethylpyrimidine and 4-methyl-5-(2-phosphoethyl)-thiazole: step 1/1. Its function is as follows. Condenses 4-methyl-5-(beta-hydroxyethyl)thiazole monophosphate (THZ-P) and 2-methyl-4-amino-5-hydroxymethyl pyrimidine pyrophosphate (HMP-PP) to form thiamine monophosphate (TMP). The polypeptide is Thiamine-phosphate synthase (Roseiflexus castenholzii (strain DSM 13941 / HLO8)).